Consider the following 147-residue polypeptide: Ubiquitin-conjugating enzyme E2 2 (147 aa).

The UBC core domain maps to 1–147 (MALKRIQKEL…AREWTQKYAM (147 aa)). Cys-85 (glycyl thioester intermediate) is an active-site residue.

The protein belongs to the ubiquitin-conjugating enzyme family. As to quaternary structure, interacts with the brc-1-brd-1 heterodimer following ionizing irradiation. As to expression, expressed in the nervous system.

It is found in the nucleus. It localises to the chromosome. Its subcellular location is the cytoplasm. The catalysed reaction is S-ubiquitinyl-[E1 ubiquitin-activating enzyme]-L-cysteine + [E2 ubiquitin-conjugating enzyme]-L-cysteine = [E1 ubiquitin-activating enzyme]-L-cysteine + S-ubiquitinyl-[E2 ubiquitin-conjugating enzyme]-L-cysteine.. It participates in protein modification; protein ubiquitination. Catalyzes the covalent attachment of ubiquitin to other proteins. Mediates the selective degradation of short-lived and abnormal proteins. Plays a role in the DNA damage response. In particular, in response to ionizing radiation, associates with the E3 ubiquitin-protein ligase brc-1-brd-1 heterodimer on chromatin to activate E3-ubiquitin ligase activity of the heterodimer, and thus its DNA damage repair mechanisms. Required, cell autonomously, for death of the linker cell, a male-specific cell which guides the elongation of the gonad; perhaps acting as part of the ubiquitin proteasome system (UPS) and modulated by heat shock transcription factor hsf-1. This Caenorhabditis elegans protein is Ubiquitin-conjugating enzyme E2 2.